Here is a 422-residue protein sequence, read N- to C-terminus: Serine--tRNA ligase (422 aa).

229-231 (TAE) provides a ligand contact to L-serine. An ATP-binding site is contributed by 258-260 (RRE). E281 is a binding site for L-serine. 345 to 348 (EISS) is an ATP binding site. Residue S379 participates in L-serine binding.

Belongs to the class-II aminoacyl-tRNA synthetase family. Type-1 seryl-tRNA synthetase subfamily. In terms of assembly, homodimer. The tRNA molecule binds across the dimer.

The protein resides in the cytoplasm. The catalysed reaction is tRNA(Ser) + L-serine + ATP = L-seryl-tRNA(Ser) + AMP + diphosphate + H(+). The enzyme catalyses tRNA(Sec) + L-serine + ATP = L-seryl-tRNA(Sec) + AMP + diphosphate + H(+). The protein operates within aminoacyl-tRNA biosynthesis; selenocysteinyl-tRNA(Sec) biosynthesis; L-seryl-tRNA(Sec) from L-serine and tRNA(Sec): step 1/1. Catalyzes the attachment of serine to tRNA(Ser). Is also able to aminoacylate tRNA(Sec) with serine, to form the misacylated tRNA L-seryl-tRNA(Sec), which will be further converted into selenocysteinyl-tRNA(Sec). In Methanosarcina mazei (strain ATCC BAA-159 / DSM 3647 / Goe1 / Go1 / JCM 11833 / OCM 88) (Methanosarcina frisia), this protein is Serine--tRNA ligase.